Consider the following 210-residue polypeptide: Fimbriae Z protein (210 aa).

One can recognise a Response regulatory domain in the interval 5–121; it reads SVIIMDEHPI…DIYNAVKMIL (117 aa). Residue Asp-56 is modified to 4-aspartylphosphate. The HTH luxR-type domain occupies 143-208; sequence GGHHDMPLSN…ELIDYAKSHE (66 aa). The H-T-H motif DNA-binding region spans 167–186; the sequence is NKEIAEQLLLSNKTISAHKA.

It is found in the cytoplasm. The protein is Fimbriae Z protein (fimZ) of Salmonella typhimurium (strain LT2 / SGSC1412 / ATCC 700720).